The primary structure comprises 355 residues: UDP-N-acetylglucosamine--N-acetylmuramyl-(pentapeptide) pyrophosphoryl-undecaprenol N-acetylglucosamine transferase (355 aa).

UDP-N-acetyl-alpha-D-glucosamine-binding positions include 14–16, asparagine 126, arginine 162, serine 190, isoleucine 243, 262–267, and glutamine 287; these read TGG and ALTVSE.

It belongs to the glycosyltransferase 28 family. MurG subfamily.

The protein localises to the cell inner membrane. It catalyses the reaction di-trans,octa-cis-undecaprenyl diphospho-N-acetyl-alpha-D-muramoyl-L-alanyl-D-glutamyl-meso-2,6-diaminopimeloyl-D-alanyl-D-alanine + UDP-N-acetyl-alpha-D-glucosamine = di-trans,octa-cis-undecaprenyl diphospho-[N-acetyl-alpha-D-glucosaminyl-(1-&gt;4)]-N-acetyl-alpha-D-muramoyl-L-alanyl-D-glutamyl-meso-2,6-diaminopimeloyl-D-alanyl-D-alanine + UDP + H(+). It participates in cell wall biogenesis; peptidoglycan biosynthesis. Its function is as follows. Cell wall formation. Catalyzes the transfer of a GlcNAc subunit on undecaprenyl-pyrophosphoryl-MurNAc-pentapeptide (lipid intermediate I) to form undecaprenyl-pyrophosphoryl-MurNAc-(pentapeptide)GlcNAc (lipid intermediate II). This Vibrio parahaemolyticus serotype O3:K6 (strain RIMD 2210633) protein is UDP-N-acetylglucosamine--N-acetylmuramyl-(pentapeptide) pyrophosphoryl-undecaprenol N-acetylglucosamine transferase.